The chain runs to 417 residues: Phosphoglycerate kinase, cytosolic (417 aa).

(2R)-3-phosphoglycerate-binding residues include Val23, Asp24, Phe25, Asn26, Arg39, Ser61, His62, Gly64, Arg65, Arg132, His168, and Arg169. ADP is bound by residues Gly214 and Ala215. Gly214 provides a ligand contact to CDP. AMP is bound by residues Ala215 and Lys216. Ala215 contacts ATP. Ala215 contacts Mg(2+). (2R)-3-phosphoglycerate is bound at residue Lys216. Residue Asp219 coordinates CDP. Asp219 serves as a coordination point for Mg(2+). The ADP site is built by Lys220 and Gly238. Residue Lys220 coordinates AMP. Lys220 is an ATP binding site. Residue Gly238 participates in CDP binding. AMP is bound by residues Ala239 and Ala311. ATP-binding residues include Ala239 and Ala311. ADP contacts are provided by Ala311 and Asn335. Residues Gly336 and Phe341 each contribute to the CDP site. 4 residues coordinate ADP: Phe341, Glu342, Asp374, and Thr375. Glu342 lines the AMP pocket. Positions 342, 374, and 375 each coordinate ATP. Asp374 lines the Mg(2+) pocket.

Belongs to the phosphoglycerate kinase family. In terms of assembly, monomer. The cofactor is Mg(2+).

It is found in the cytoplasm. It catalyses the reaction (2R)-3-phosphoglycerate + ATP = (2R)-3-phospho-glyceroyl phosphate + ADP. The protein operates within carbohydrate degradation; glycolysis; pyruvate from D-glyceraldehyde 3-phosphate: step 2/5. The polypeptide is Phosphoglycerate kinase, cytosolic (PGKB) (Leishmania mexicana).